Here is a 176-residue protein sequence, read N- to C-terminus: Adenylyl-sulfate kinase (176 aa).

12 to 19 contributes to the ATP binding site; that stretch reads GLSGAGKS. The Phosphoserine intermediate role is filled by Ser-86.

The protein belongs to the APS kinase family.

The enzyme catalyses adenosine 5'-phosphosulfate + ATP = 3'-phosphoadenylyl sulfate + ADP + H(+). The protein operates within sulfur metabolism; hydrogen sulfide biosynthesis; sulfite from sulfate: step 2/3. Functionally, catalyzes the synthesis of activated sulfate. In Gloeothece citriformis (strain PCC 7424) (Cyanothece sp. (strain PCC 7424)), this protein is Adenylyl-sulfate kinase.